The sequence spans 300 residues: Cholesterol 25-hydroxylase-like protein (300 aa).

A glycan (N-linked (GlcNAc...) asparagine) is linked at N9. Helical transmembrane passes span 54–73 (YTWVAVFTFIDVFLCNVPFF), 95–115 (LQGWNQLLWIYPMALVQLIWV), and 130–152 (MLSQLAIFFLAFDFTYFWFHYIN). In terms of domain architecture, Fatty acid hydroxylase spans 135–266 (AIFFLAFDFT…WFNYLDRLMG (132 aa)). Positions 148 to 152 (FHYIN) match the Histidine box-1 motif. The Histidine box-2 signature appears at 163 to 167 (HSVHH). A helical transmembrane segment spans residues 192-212 (ITTIPWIFPTHCLTYWIWFFI). The Histidine box-3 signature appears at 242-248 (AHDMHHL).

This sequence belongs to the sterol desaturase family. It depends on Fe cation as a cofactor.

It is found in the membrane. Its function is as follows. Probable sterol desaturase. This chain is Cholesterol 25-hydroxylase-like protein, found in Caenorhabditis elegans.